We begin with the raw amino-acid sequence, 365 residues long: DNA polymerase IV (365 aa).

The region spanning isoleucine 14–glycine 198 is the UmuC domain. Residues aspartate 18 and aspartate 116 each coordinate Mg(2+). Residue glutamate 117 is part of the active site.

It belongs to the DNA polymerase type-Y family. As to quaternary structure, monomer. The cofactor is Mg(2+).

It is found in the cytoplasm. It carries out the reaction DNA(n) + a 2'-deoxyribonucleoside 5'-triphosphate = DNA(n+1) + diphosphate. Poorly processive, error-prone DNA polymerase involved in untargeted mutagenesis. Copies undamaged DNA at stalled replication forks, which arise in vivo from mismatched or misaligned primer ends. These misaligned primers can be extended by PolIV. Exhibits no 3'-5' exonuclease (proofreading) activity. May be involved in translesional synthesis, in conjunction with the beta clamp from PolIII. The polypeptide is DNA polymerase IV (Streptococcus pyogenes serotype M3 (strain ATCC BAA-595 / MGAS315)).